The sequence spans 119 residues: uncharacterized protein (119 aa).

Residues 6–36 are a coiled coil; sequence QAYLDIQGKIAEFRREIKALRVEEKAITANL. The segment at 95 to 119 is disordered; it reads AVTGSSSNVKIRKSAPARNEEDDDG.

This is an uncharacterized protein from Frog virus 3 (isolate Goorha) (FV-3).